A 304-amino-acid chain; its full sequence is Cell surface-binding protein OPG105 (304 aa).

Positions 1-235 (MPQQLSPINI…NDDTQVYYSG (235 aa)) constitute an Alpha-carbonic anhydrase domain. Residues 1 to 275 (MPQQLSPINI…YQKYIEENKT (275 aa)) are Virion surface-facing. A helical membrane pass occupies residues 276-294 (FAIIAIVFVFILTAILFFM). The Intravirion segment spans residues 295 to 304 (SRRYSREKQN).

This sequence belongs to the alpha-carbonic anhydrase family. Homodimer; disulfide-linked. In terms of processing, apparently non-glycosylated.

It is found in the virion membrane. Binds to chondroitin sulfate on the cell surface to provide virion attachment to target cell. This chain is Cell surface-binding protein OPG105 (OPG105), found in Bos taurus (Bovine).